The chain runs to 567 residues: UPF0313 protein CTN_0332 (567 aa).

Positions 288 to 560 constitute a Radical SAM core domain; sequence KAIETVKFSI…NKMKENVLFK (273 aa). [4Fe-4S] cluster-binding residues include cysteine 303, cysteine 307, and cysteine 310.

It belongs to the UPF0313 family. The cofactor is [4Fe-4S] cluster.

This chain is UPF0313 protein CTN_0332, found in Thermotoga neapolitana (strain ATCC 49049 / DSM 4359 / NBRC 107923 / NS-E).